The chain runs to 390 residues: Succinate--CoA ligase [ADP-forming] subunit beta (390 aa).

In terms of domain architecture, ATP-grasp spans 9-245 (KHLLKKYNIP…TTQEDEHETM (237 aa)). Residues lysine 46, 53–55 (GRG), glutamate 99, serine 102, and glutamate 107 contribute to the ATP site. Mg(2+) is bound by residues asparagine 200 and aspartate 214. Residues asparagine 265 and 322 to 324 (GIV) contribute to the substrate site.

Belongs to the succinate/malate CoA ligase beta subunit family. Heterotetramer of two alpha and two beta subunits. Requires Mg(2+) as cofactor.

The enzyme catalyses succinate + ATP + CoA = succinyl-CoA + ADP + phosphate. It catalyses the reaction GTP + succinate + CoA = succinyl-CoA + GDP + phosphate. It participates in carbohydrate metabolism; tricarboxylic acid cycle; succinate from succinyl-CoA (ligase route): step 1/1. In terms of biological role, succinyl-CoA synthetase functions in the citric acid cycle (TCA), coupling the hydrolysis of succinyl-CoA to the synthesis of either ATP or GTP and thus represents the only step of substrate-level phosphorylation in the TCA. The beta subunit provides nucleotide specificity of the enzyme and binds the substrate succinate, while the binding sites for coenzyme A and phosphate are found in the alpha subunit. The protein is Succinate--CoA ligase [ADP-forming] subunit beta of Coxiella burnetii (strain CbuK_Q154) (Coxiella burnetii (strain Q154)).